The sequence spans 1274 residues: ABC multidrug transporter E (1274 aa).

N-linked (GlcNAc...) asparagine glycosylation is present at N48. The 225-residue stretch at F120 to K344 folds into the ABC transmembrane type-1 1 domain. The next 4 helical transmembrane spans lie at L183–V203, S205–I225, I280–F300, and V321–I341. In terms of domain architecture, ABC transporter 1 spans I377–N629. An ATP-binding site is contributed by G412–S419. 2 N-linked (GlcNAc...) asparagine glycosylation sites follow: N473 and N580. 2 helical membrane-spanning segments follow: residues V697 to F717 and F737 to G757. The region spanning V697–Q984 is the ABC transmembrane type-1 2 domain. N792 is a glycosylation site (N-linked (GlcNAc...) asparagine). Transmembrane regions (helical) follow at residues F818–W838, L840–I860, and L924–G944. The ABC transporter 2 domain maps to V1023–S1269. Residue N1044 is glycosylated (N-linked (GlcNAc...) asparagine). G1057–T1064 contributes to the ATP binding site. N-linked (GlcNAc...) asparagine glycosylation is present at N1117.

This sequence belongs to the ABC transporter superfamily. ABCB family. Multidrug resistance exporter (TC 3.A.1.201) subfamily.

The protein localises to the cell membrane. Pleiotropic ABC efflux transporter that may be involved in A.fumigatus adaptation to azoles such as vorizonazole. The protein is ABC multidrug transporter E of Aspergillus fumigatus (strain ATCC MYA-4609 / CBS 101355 / FGSC A1100 / Af293) (Neosartorya fumigata).